A 1058-amino-acid chain; its full sequence is COP1-interacting protein 7 (1058 aa).

Disordered regions lie at residues 123 to 147 (LGGTWTSQKSTALSKTKGETDGDTV), 262 to 281 (HGNSMDASSQGSFETGQEGR), and 330 to 463 (MGDV…GNDN). 2 stretches are compositionally biased toward polar residues: residues 126–136 (TWTSQKSTALS) and 262–276 (HGNSMDASSQGSFET). Residues 340–347 (SKKKKKKK) carry the Nuclear localization signal 1 motif. Residues 340-353 (SKKKKKKKKNKKKS) show a composition bias toward basic residues. Over residues 403-414 (DSDESGEEEGFV) the composition is skewed to acidic residues. Residues 431–438 (ERRHKSTS) carry the Nuclear localization signal 2 motif. A compositionally biased stretch (basic residues) spans 432–446 (RRHKSTSHRQRKHKS). Residues 447–462 (HNGDDDSSNKETKGND) are compositionally biased toward basic and acidic residues. The residue at position 477 (Ser-477) is a Phosphoserine. The disordered stretch occupies residues 708-887 (AGEQTLDGKE…KSVELSRDPS (180 aa)). The segment covering 757–773 (SKSEMEEERKKRMEELL) has biased composition (basic and acidic residues). Residues 764-771 (ERKKRMEE) carry the Nuclear localization signal 3 motif. A compositionally biased stretch (low complexity) spans 783-808 (KSSGGSVSSSLASKKTPTVTKSVKSS). Basic and acidic residues-rich tracts occupy residues 860–869 (KTEKAQEKKS) and 878–887 (KSVELSRDPS). Residues Ser-915, Ser-986, and Ser-992 each carry the phosphoserine modification. Positions 1020 to 1041 (STPPATEADHSRKKWNSEETSP) are disordered. The segment covering 1026–1040 (EADHSRKKWNSEETS) has biased composition (basic and acidic residues).

As to quaternary structure, interacts with COP1.

Its subcellular location is the nucleus. In terms of biological role, exhibits transcriptional activation activity. Positive regulator of light-regulated genes, probably being a direct downstream target of COP1 for mediating light control of gene expression. The chain is COP1-interacting protein 7 from Arabidopsis thaliana (Mouse-ear cress).